Consider the following 244-residue polypeptide: 1-(5-phosphoribosyl)-5-[(5-phosphoribosylamino)methylideneamino] imidazole-4-carboxamide isomerase (244 aa).

Aspartate 9 acts as the Proton acceptor in catalysis. The active-site Proton donor is aspartate 131.

This sequence belongs to the HisA/HisF family.

It is found in the cytoplasm. The enzyme catalyses 1-(5-phospho-beta-D-ribosyl)-5-[(5-phospho-beta-D-ribosylamino)methylideneamino]imidazole-4-carboxamide = 5-[(5-phospho-1-deoxy-D-ribulos-1-ylimino)methylamino]-1-(5-phospho-beta-D-ribosyl)imidazole-4-carboxamide. It functions in the pathway amino-acid biosynthesis; L-histidine biosynthesis; L-histidine from 5-phospho-alpha-D-ribose 1-diphosphate: step 4/9. This is 1-(5-phosphoribosyl)-5-[(5-phosphoribosylamino)methylideneamino] imidazole-4-carboxamide isomerase from Campylobacter jejuni subsp. jejuni serotype O:6 (strain 81116 / NCTC 11828).